The chain runs to 473 residues: Pre-mRNA-splicing factor PRP46 (473 aa).

Residues 1 to 10 (MSTSLETPSG) show a composition bias toward polar residues. Disordered regions lie at residues 1–21 (MSTS…VASG) and 103–126 (GPNV…QAVA). 7 WD repeats span residues 180-219 (GHMG…LKLS), 222-261 (GHIS…VIRH), 264-303 (GHFS…NIFT), 306-347 (GHTS…NTLT), 349-388 (HKKS…FVNN), 391-429 (GHEA…PFQH), and 440-473 (DAEA…SEQA).

This sequence belongs to the WD repeat PRL1/PRL2 family. In terms of assembly, associated with the spliceosome.

Its subcellular location is the cytoplasm. The protein localises to the nucleus. In terms of biological role, involved in pre-mRNA splicing and required for cell cycle progression at G2/M. This is Pre-mRNA-splicing factor PRP46 (PRP46) from Cryptococcus neoformans var. neoformans serotype D (strain JEC21 / ATCC MYA-565) (Filobasidiella neoformans).